Reading from the N-terminus, the 353-residue chain is DNA polymerase IV (353 aa).

One can recognise a UmuC domain in the interval 6-187 (IIHVDCDCFY…LPVSKLHGVG (182 aa)). Mg(2+) contacts are provided by aspartate 10 and aspartate 105. The active site involves glutamate 106.

It belongs to the DNA polymerase type-Y family. Monomer. Mg(2+) serves as cofactor.

It is found in the cytoplasm. The catalysed reaction is DNA(n) + a 2'-deoxyribonucleoside 5'-triphosphate = DNA(n+1) + diphosphate. Functionally, poorly processive, error-prone DNA polymerase involved in untargeted mutagenesis. Copies undamaged DNA at stalled replication forks, which arise in vivo from mismatched or misaligned primer ends. These misaligned primers can be extended by PolIV. Exhibits no 3'-5' exonuclease (proofreading) activity. May be involved in translesional synthesis, in conjunction with the beta clamp from PolIII. The sequence is that of DNA polymerase IV from Pseudomonas fluorescens (strain Pf0-1).